The chain runs to 427 residues: Glutamate-1-semialdehyde 2,1-aminomutase (427 aa).

Lys265 carries the N6-(pyridoxal phosphate)lysine modification.

The protein belongs to the class-III pyridoxal-phosphate-dependent aminotransferase family. HemL subfamily. Homodimer. Pyridoxal 5'-phosphate serves as cofactor.

The protein resides in the cytoplasm. The catalysed reaction is (S)-4-amino-5-oxopentanoate = 5-aminolevulinate. It participates in porphyrin-containing compound metabolism; protoporphyrin-IX biosynthesis; 5-aminolevulinate from L-glutamyl-tRNA(Glu): step 2/2. The protein is Glutamate-1-semialdehyde 2,1-aminomutase of Pseudomonas savastanoi pv. phaseolicola (strain 1448A / Race 6) (Pseudomonas syringae pv. phaseolicola (strain 1448A / Race 6)).